The sequence spans 141 residues: Holo-[acyl-carrier-protein] synthase (141 aa).

Residues Asp-7 and Glu-57 each contribute to the Mg(2+) site.

Belongs to the P-Pant transferase superfamily. AcpS family. Requires Mg(2+) as cofactor.

It localises to the cytoplasm. It carries out the reaction apo-[ACP] + CoA = holo-[ACP] + adenosine 3',5'-bisphosphate + H(+). Transfers the 4'-phosphopantetheine moiety from coenzyme A to a Ser of acyl-carrier-protein. This Corynebacterium efficiens (strain DSM 44549 / YS-314 / AJ 12310 / JCM 11189 / NBRC 100395) protein is Holo-[acyl-carrier-protein] synthase.